Consider the following 210-residue polypeptide: Glutathione S-transferase P 1 (210 aa).

Residues 1–80 (PEYTIIYFNA…LLARNHDLYG (80 aa)) form the GST N-terminal domain. Glutathione is bound by residues tyrosine 7, arginine 13, tryptophan 38, lysine 44, 51 to 52 (QL), and 64 to 65 (QS). The 122-residue stretch at 82 to 203 (NPREASLIDM…SSDAHKKRPI (122 aa)) folds into the GST C-terminal domain.

This sequence belongs to the GST superfamily. Pi family. In terms of assembly, homodimer.

It localises to the cytoplasm. Its subcellular location is the mitochondrion. It is found in the nucleus. It catalyses the reaction RX + glutathione = an S-substituted glutathione + a halide anion + H(+). Its function is as follows. Conjugation of reduced glutathione to a wide number of exogenous and endogenous hydrophobic electrophiles. This chain is Glutathione S-transferase P 1, found in Bufo bufo (European toad).